Consider the following 591-residue polypeptide: Aspartate--tRNA(Asp/Asn) ligase (591 aa).

L-aspartate is bound at residue E175. The segment at 199 to 202 is aspartate; that stretch reads QQFK. 2 residues coordinate L-aspartate: R221 and H453. ATP is bound at residue 221 to 223; the sequence is RDE. E486 is an ATP binding site. Residue R493 participates in L-aspartate binding. Residue 538 to 541 coordinates ATP; it reads GIDR.

This sequence belongs to the class-II aminoacyl-tRNA synthetase family. Type 1 subfamily. As to quaternary structure, homodimer.

It localises to the cytoplasm. It carries out the reaction tRNA(Asx) + L-aspartate + ATP = L-aspartyl-tRNA(Asx) + AMP + diphosphate. Its function is as follows. Aspartyl-tRNA synthetase with relaxed tRNA specificity since it is able to aspartylate not only its cognate tRNA(Asp) but also tRNA(Asn). Reaction proceeds in two steps: L-aspartate is first activated by ATP to form Asp-AMP and then transferred to the acceptor end of tRNA(Asp/Asn). This chain is Aspartate--tRNA(Asp/Asn) ligase, found in Cereibacter sphaeroides (strain ATCC 17029 / ATH 2.4.9) (Rhodobacter sphaeroides).